The primary structure comprises 337 residues: Glyceraldehyde-3-phosphate dehydrogenase 1, cytosolic (337 aa).

NAD(+) is bound by residues 13-14 (RI), Asp-35, and Arg-82. D-glyceraldehyde 3-phosphate is bound by residues 153 to 155 (SCT), Thr-184, 213 to 214 (TG), and Arg-236. The active-site Nucleophile is Cys-154. Asn-318 serves as a coordination point for NAD(+).

The protein belongs to the glyceraldehyde-3-phosphate dehydrogenase family. As to quaternary structure, homotetramer.

The protein localises to the cytoplasm. The enzyme catalyses D-glyceraldehyde 3-phosphate + phosphate + NAD(+) = (2R)-3-phospho-glyceroyl phosphate + NADH + H(+). The protein operates within carbohydrate degradation; glycolysis; pyruvate from D-glyceraldehyde 3-phosphate: step 1/5. Its function is as follows. Key enzyme in glycolysis that catalyzes the first step of the pathway by converting D-glyceraldehyde 3-phosphate (G3P) into 3-phospho-D-glyceroyl phosphate. Essential for the maintenance of cellular ATP levels and carbohydrate metabolism. In Hordeum vulgare (Barley), this protein is Glyceraldehyde-3-phosphate dehydrogenase 1, cytosolic (GAPC).